Reading from the N-terminus, the 131-residue chain is PMILLALGLLADTDIASLFTAITMDIGMCVTGLAAALITSSHLLRWVFYGISCAFFVAVLYVLLVQWPADAEAAGTSEIFGTLKILTVVLWLGYPILWALGSEGVALLSVGVTSWGYSGLDILAKYVFAFI.

The helical transmembrane segment at P1–A11 threads the bilayer. Residues D12–D14 lie on the Cytoplasmic side of the membrane. Residues I15–I38 form a helical membrane-spanning segment. Over T39–S41 the chain is Extracellular. The chain crosses the membrane as a helical span at residues H42 to L64. Over V65–T76 the chain is Cytoplasmic. The helical transmembrane segment at S77 to L100 threads the bilayer. Residues G101–S109 are Extracellular-facing. A helical transmembrane segment spans residues V110–I131. K125 is subject to N6-(retinylidene)lysine.

This sequence belongs to the archaeal/bacterial/fungal opsin family.

Its subcellular location is the cell membrane. Functionally, light-driven chloride pump. In Haloarcula argentinensis, this protein is Cruxhalorhodopsin-1 (choP1).